Reading from the N-terminus, the 388-residue chain is MKHLHRFFSSDASGGIILIIAAILAMIMANSGATSGWYHDFLETPVQLRVGSLEINKNMLLWINDALMAVFFLLVGLEVKRELMQGSLASLRQAAFPVIAAIGGMIVPALLYLAFNYADPITREGWAIPAATDIAFALGVLALLGSRVPLVLKIFLMALAIIDDLGAIIIIALFYTNDLSMASLGVAAVAIAVLAVLNLCGVRRTGVYILVGVVLWTAVLKSGVHATLAGVIVGFFIPLKEKHGRSPAKRLEHVLHPWVAYLILPLFAFANAGVSLQGVTLDGLTSILPLGIIAGLLIGKPLGISLFCWLALRLKLAHLPEGTTYQQIMVVGILCGIGFTMSIFIASLAFGSVDPELINWAKLGILVGSISSAVIGYSWLRVRLRPSV.

Residues 1–11 (MKHLHRFFSSD) lie on the Cytoplasmic side of the membrane. The helical transmembrane segment at 12–31 (ASGGIILIIAAILAMIMANS) threads the bilayer. Residues 32–58 (GATSGWYHDFLETPVQLRVGSLEINKN) lie on the Periplasmic side of the membrane. Residues 59–80 (MLLWINDALMAVFFLLVGLEVK) traverse the membrane as a helical segment. Topologically, residues 81–96 (RELMQGSLASLRQAAF) are cytoplasmic. Residues 97-116 (PVIAAIGGMIVPALLYLAFN) traverse the membrane as a helical segment. At 117–122 (YADPIT) the chain is on the periplasmic side. Residues 123-130 (REGWAIPA) form a helical membrane-spanning segment. Topologically, residues 131-154 (ATDIAFALGVLALLGSRVPLVLKI) are cytoplasmic. A helical membrane pass occupies residues 155–176 (FLMALAIIDDLGAIIIIALFYT). The Periplasmic portion of the chain corresponds to 177 to 180 (NDLS). A helical transmembrane segment spans residues 181-200 (MASLGVAAVAIAVLAVLNLC). Residues 201–204 (GVRR) lie on the Cytoplasmic side of the membrane. The chain crosses the membrane as a helical span at residues 205–222 (TGVYILVGVVLWTAVLKS). A topological domain (periplasmic) is located at residue Gly-223. The chain crosses the membrane as a helical span at residues 224-236 (VHATLAGVIVGFF). Residues 237 to 253 (IPLKEKHGRSPAKRLEH) lie on the Cytoplasmic side of the membrane. Residues 254–272 (VLHPWVAYLILPLFAFANA) traverse the membrane as a helical segment. Over 273–286 (GVSLQGVTLDGLTS) the chain is Periplasmic. Residues 287–310 (ILPLGIIAGLLIGKPLGISLFCWL) form a helical membrane-spanning segment. Topologically, residues 311-339 (ALRLKLAHLPEGTTYQQIMVVGILCGIGF) are cytoplasmic. A helical membrane pass occupies residues 340–350 (TMSIFIASLAF). Residues 351–357 (GSVDPEL) lie on the Periplasmic side of the membrane. The helical transmembrane segment at 358-380 (INWAKLGILVGSISSAVIGYSWL) threads the bilayer. The Cytoplasmic segment spans residues 381-388 (RVRLRPSV).

The protein belongs to the NhaA Na(+)/H(+) (TC 2.A.33) antiporter family.

Its subcellular location is the cell inner membrane. It catalyses the reaction Na(+)(in) + 2 H(+)(out) = Na(+)(out) + 2 H(+)(in). Functionally, na(+)/H(+) antiporter that extrudes sodium in exchange for external protons. This Shigella flexneri protein is Na(+)/H(+) antiporter NhaA.